Here is a 489-residue protein sequence, read N- to C-terminus: Rhamnulokinase (489 aa).

13 to 17 provides a ligand contact to ATP; sequence ASSGR. A disulfide bond links Cys-68 and Cys-222. Substrate-binding positions include Gly-83 and 236 to 238; that span reads HDT. The Proton acceptor role is filled by Asp-237. Residue Thr-259 participates in ATP binding. Asn-296 provides a ligand contact to substrate. Gln-304 is a binding site for ATP. Cys-353 and Cys-370 are oxidised to a cystine. Gly-402 contributes to the ATP binding site. A disulfide bridge connects residues Cys-413 and Cys-417.

Belongs to the rhamnulokinase family. The cofactor is Mg(2+).

It catalyses the reaction L-rhamnulose + ATP = L-rhamnulose 1-phosphate + ADP + H(+). It functions in the pathway carbohydrate degradation; L-rhamnose degradation; glycerone phosphate from L-rhamnose: step 2/3. In terms of biological role, involved in the catabolism of L-rhamnose (6-deoxy-L-mannose). Catalyzes the transfer of the gamma-phosphate group from ATP to the 1-hydroxyl group of L-rhamnulose to yield L-rhamnulose 1-phosphate. This chain is Rhamnulokinase, found in Salmonella choleraesuis (strain SC-B67).